Here is a 249-residue protein sequence, read N- to C-terminus: Gamma-glutamyl peptidase 3 (249 aa).

Residues 19 to 217 (SEFVKKTYGG…VDRVLNMKLM (199 aa)) form the Glutamine amidotransferase type-1 domain. Catalysis depends on Cys-103, which acts as the Nucleophile. Active-site residues include His-196 and Glu-198.

This sequence belongs to the peptidase C26 family.

The protein resides in the cytoplasm. The protein localises to the cytosol. The enzyme catalyses an S-[(1E)-1-(hydroxyimino)-omega-(methylsulfanyl)alkyl]-L-glutathione + H2O = an S-[(1E)-1-(hydroxyimino)-omega-(methylsulfanyl)alkyl]-L-cysteinylglycine + L-glutamate. It carries out the reaction (E)-1-(glutathione-S-yl)-2-(1H-indol-3-yl)acetohydroximate + H2O = (E)-1-(glycyl-L-cystein-S-yl)-2-(1H-indol-3-yl)acetohydroximate + L-glutamate. The catalysed reaction is 2-(glutathion-S-yl)-2-(1H-indol-3-yl)acetonitrile + H2O = 2-(glycyl-L-cystein-S-yl)-2-(1H-indol-3-yl)acetonitrile + L-glutamate. It catalyses the reaction (Z)-1-(glutathione-S-yl)-2-phenylacetohydroximate + H2O = (Z)-1-(glycyl-L-cystein-S-yl)-2-phenylacetohydroximate + L-glutamate. It participates in secondary metabolite biosynthesis. Its function is as follows. Involved in glucosinolate biosynthesis. Hydrolyzes the gamma-glutamyl peptide bond of several glutathione (GSH) conjugates to produce Cys-Gly conjugates related to glucosinolates. The gamma-Glu-Cys-Gly-GSH conjugates are the sulfur-donating molecule in glucosinolate biosynthesis. Can use the GSH conjugate of the camalexin intermediate IAN (GS-IAN) as substrate. Required for the biosynthesis of camalexin, a pathogen-inducible phytoalexin with antibacterial and antifungal properties. The chain is Gamma-glutamyl peptidase 3 from Arabidopsis thaliana (Mouse-ear cress).